We begin with the raw amino-acid sequence, 104 residues long: Naphthalene 1,2-dioxygenase/salicylate 5-hydroxylase systems, ferredoxin component (104 aa).

The Rieske domain maps to 6-101; that stretch reads IDAACLDDIP…VKIENMRVML (96 aa). [2Fe-2S] cluster is bound by residues Cys-45, His-47, Cys-64, and His-67.

This sequence belongs to the bacterial ring-hydroxylating dioxygenase ferredoxin component family. Ferredoxin NagAb belongs to both the salicylate 5-hydroxylase (S5H) and the naphthalene 1,2-dioxygenase (NDO) multicomponent enzyme systems. The NDO multicomponent enzyme system is composed of an electron transfer component and a dioxygenase component (iron sulfur protein (ISP)). The electron transfer component is composed of a ferredoxin reductase (NagAa) and a ferredoxin (NagAb), and the dioxygenase component is formed by a large alpha subunit (NagAc) and a small beta subunit (NagAd). The S5H multicomponent enzyme system is composed of an electron transfer component and a monooxygenase component. The electron transfer component is composed of a ferredoxin reductase (NagAa) and a ferredoxin (NagAb), and the monooxygenase component is formed by a large subunit (NagG) and a small subunit (NagH). Requires [2Fe-2S] cluster as cofactor.

Its pathway is aromatic compound metabolism; naphthalene degradation. Component of two multicomponent enzyme systems which are involved in the catabolism of naphthalene. Plays a role as an electron transfer component for both salicylate 5-hydroxylase (S5H) and naphthalene 1,2-dioxygenase (NDO) systems, by transferring electrons to the oxygenase components. The chain is Naphthalene 1,2-dioxygenase/salicylate 5-hydroxylase systems, ferredoxin component from Ralstonia sp.